The sequence spans 356 residues: MENFLDNKNMLYALKMISPGTPLRLGLNNVLRAKTGGLIVIATNEDVMKIVDGGFAINAEYSPSYLYELAKMDGAIVLSGDVKKILFANAQLIPDYFIETSETGTRHRTAERVAKQTGAIVIGISQRRNVITVYRGNEKYVVEDISKIFTKANQAIQTLEKYKTVLDQAVTNLNALEFNDLVTIYDVALVMQKMEMVMRVTSIIEKYVIELGDEGTLVSMQLEELMGTTRIDQKLIFKDYNKENTEIKELMKKVKNLNSEELIELVNMAKLLGYSGFSESMDMPIKTRGYRILSKIHRLPTAIIENLVNYFENFQQILDASIEELDEVEGIGEIRATYIKNGLIKMKQLVLLDRHI.

Residues 7–147 (NKNMLYALKM…EKYVVEDISK (141 aa)) enclose the DAC domain. ATP contacts are provided by residues Gly-74, Leu-92, and 105-109 (TRHRT).

It belongs to the DisA family. Homooctamer. The cofactor is Mg(2+).

It catalyses the reaction 2 ATP = 3',3'-c-di-AMP + 2 diphosphate. Its function is as follows. Participates in a DNA-damage check-point that is active prior to asymmetric division when DNA is damaged. DisA forms globular foci that rapidly scan along the chromosomes during sporulation, searching for lesions. When a lesion is present, DisA pauses at the lesion site. This triggers a cellular response that culminates in a temporary block in sporulation initiation. Also has diadenylate cyclase activity, catalyzing the condensation of 2 ATP molecules into cyclic di-AMP (c-di-AMP). c-di-AMP acts as a signaling molecule that couples DNA integrity with progression of sporulation. The rise in c-di-AMP level generated by DisA while scanning the chromosome, operates as a positive signal that advances sporulation; upon encountering a lesion, the DisA focus arrests at the damaged site and halts c-di-AMP synthesis. The polypeptide is DNA integrity scanning protein DisA (Clostridioides difficile (strain 630) (Peptoclostridium difficile)).